Reading from the N-terminus, the 332-residue chain is Glyceraldehyde-3-phosphate dehydrogenase (332 aa).

Residues 10 to 11 (RI), D32, and M77 each bind NAD(+). Residues 148–150 (SCT), T179, 208–209 (TG), and R231 contribute to the D-glyceraldehyde 3-phosphate site. C149 serves as the catalytic Nucleophile. N313 is an NAD(+) binding site.

The protein belongs to the glyceraldehyde-3-phosphate dehydrogenase family. As to quaternary structure, homotetramer.

It is found in the cytoplasm. It catalyses the reaction D-glyceraldehyde 3-phosphate + phosphate + NAD(+) = (2R)-3-phospho-glyceroyl phosphate + NADH + H(+). The protein operates within carbohydrate degradation; glycolysis; pyruvate from D-glyceraldehyde 3-phosphate: step 1/5. This chain is Glyceraldehyde-3-phosphate dehydrogenase (GPDA), found in Phytophthora infestans (Potato late blight agent).